The following is a 500-amino-acid chain: Maturase K (500 aa).

The protein belongs to the intron maturase 2 family. MatK subfamily.

The protein localises to the plastid. The protein resides in the chloroplast. Its function is as follows. Usually encoded in the trnK tRNA gene intron. Probably assists in splicing its own and other chloroplast group II introns. The polypeptide is Maturase K (Helianthus annuus (Common sunflower)).